We begin with the raw amino-acid sequence, 528 residues long: ATP synthase F(1) complex catalytic subunit beta, mitochondrial (528 aa).

The N-terminal 46 residues, 1–46 (MLGLVGRVVAASASGALRGLSPSAPLPQAQLLLRAAPAALQPARDY), are a transit peptide targeting the mitochondrion. O-linked (GlcNAc) serine glycosylation occurs at serine 106. 2 positions are modified to N6-acetyllysine; alternate: lysine 124 and lysine 161. Lysine 124 and lysine 161 each carry N6-succinyllysine; alternate. Lysine 198 is modified (N6-acetyllysine). ADP-binding residues include glycine 209, valine 210, glycine 211, lysine 212, threonine 213, and valine 214. Glycine 209 contacts ATP. Residues glycine 209, valine 210, glycine 211, lysine 212, and threonine 213 each coordinate phosphate. Positions 211, 212, 213, and 214 each coordinate ATP. Residue threonine 213 coordinates Mg(2+). Residue glutamate 238 coordinates Mg(2+). Arginine 239 contacts ATP. 2 positions are modified to N6-acetyllysine; alternate: lysine 259 and lysine 264. 2 positions are modified to N6-succinyllysine; alternate: lysine 259 and lysine 264. Threonine 312 is subject to Phosphothreonine. Serine 415 carries the post-translational modification Phosphoserine. Lysine 426 is modified (N6-acetyllysine). A Phosphoserine modification is found at serine 433. N6-acetyllysine is present on residues lysine 480 and lysine 485. Lysine 522 bears the N6-acetyllysine; alternate mark. N6-succinyllysine; alternate is present on lysine 522.

This sequence belongs to the ATPase alpha/beta chains family. Homotrimer. Component of the ATP synthase complex composed at least of ATP5F1A/subunit alpha, ATP5F1B/subunit beta, ATP5MC1/subunit c (homooctomer), MT-ATP6/subunit a, MT-ATP8/subunit 8, ATP5ME/subunit e, ATP5MF/subunit f, ATP5MG/subunit g, ATP5MK/subunit k, ATP5MJ/subunit j, ATP5F1C/subunit gamma, ATP5F1D/subunit delta, ATP5F1E/subunit epsilon, ATP5PF/subunit F6, ATP5PB/subunit b, ATP5PD/subunit d, ATP5PO/subunit OSCP. ATP synthase complex consists of a soluble F(1) head domain (subunits alpha(3) and beta(3)) - the catalytic core - and a membrane F(0) domain - the membrane proton channel (subunits c, a, 8, e, f, g, k and j). These two domains are linked by a central stalk (subunits gamma, delta, and epsilon) rotating inside the F1 region and a stationary peripheral stalk (subunits F6, b, d, and OSCP). Interacts with PPIF. Interacts with BCL2L1 isoform BCL-X(L); the interaction mediates the association of BCL2L1 isoform BCL-X(L) with the mitochondrial membrane F(1)F(0) ATP synthase and enhances neurons metabolic efficiency. Interacts with CLN5 and PPT1. Interacts with S100A1; this interaction increases F1-ATPase activity. Interacts with MTLN. Interacts with TTC5/STRAP; the interaction results in decreased mitochondrial ATP production.

Its subcellular location is the mitochondrion inner membrane. It catalyses the reaction ATP + H2O + 4 H(+)(in) = ADP + phosphate + 5 H(+)(out). Functionally, catalytic subunit beta, of the mitochondrial membrane ATP synthase complex (F(1)F(0) ATP synthase or Complex V) that produces ATP from ADP in the presence of a proton gradient across the membrane which is generated by electron transport complexes of the respiratory chain. ATP synthase complex consist of a soluble F(1) head domain - the catalytic core - and a membrane F(1) domain - the membrane proton channel. These two domains are linked by a central stalk rotating inside the F(1) region and a stationary peripheral stalk. During catalysis, ATP synthesis in the catalytic domain of F(1) is coupled via a rotary mechanism of the central stalk subunits to proton translocation. In vivo, can only synthesize ATP although its ATP hydrolase activity can be activated artificially in vitro. With the subunit alpha (ATP5F1A), forms the catalytic core in the F(1) domain. This is ATP synthase F(1) complex catalytic subunit beta, mitochondrial from Bos taurus (Bovine).